A 344-amino-acid chain; its full sequence is Fructose-1,6-bisphosphatase, cytosolic (344 aa).

Glu71, Glu100, Asp121, Leu123, and Asp124 together coordinate Mg(2+). Residues 124–127 (DGSS), Asn215, Tyr247, Tyr267, and Lys277 contribute to the substrate site. Glu283 serves as a coordination point for Mg(2+).

It belongs to the FBPase class 1 family. Mg(2+) serves as cofactor.

It is found in the cytoplasm. It carries out the reaction beta-D-fructose 1,6-bisphosphate + H2O = beta-D-fructose 6-phosphate + phosphate. This chain is Fructose-1,6-bisphosphatase, cytosolic, found in Oryza coarctata (Wild rice).